The primary structure comprises 251 residues: Thiamine thiazole synthase (251 aa).

Residues Ser34, 53–54 (EK), Gly61, Val125, and 151–153 (HVD) contribute to the NAD(+) site. Fe cation is bound by residues Asp153 and His168. Met216 contacts NAD(+). Arg226 contributes to the glycine binding site.

Belongs to the THI4 family. Homooctamer; tetramer of dimers. Fe(2+) is required as a cofactor.

It catalyses the reaction hydrogen sulfide + glycine + NAD(+) = ADP-5-ethyl-4-methylthiazole-2-carboxylate + nicotinamide + 3 H2O + H(+). Its pathway is cofactor biosynthesis; thiamine diphosphate biosynthesis. Involved in the biosynthesis of the thiazole moiety of thiamine. Catalyzes the conversion of NAD and glycine to adenosine diphosphate 5-(2-hydroxyethyl)-4-methylthiazole-2-carboxylate (ADT), an adenylated thiazole intermediate, using free sulfide as a source of sulfur. The polypeptide is Thiamine thiazole synthase (Thermococcus kodakarensis (strain ATCC BAA-918 / JCM 12380 / KOD1) (Pyrococcus kodakaraensis (strain KOD1))).